The primary structure comprises 121 residues: Protein TusC (121 aa).

Belongs to the DsrF/TusC family. Heterohexamer, formed by a dimer of trimers. The hexameric TusBCD complex contains 2 copies each of TusB, TusC and TusD. The TusBCD complex interacts with TusE.

It localises to the cytoplasm. Part of a sulfur-relay system required for 2-thiolation of 5-methylaminomethyl-2-thiouridine (mnm(5)s(2)U) at tRNA wobble positions. This chain is Protein TusC, found in Yersinia pestis bv. Antiqua (strain Antiqua).